The primary structure comprises 285 residues: G patch domain-containing protein 11 (285 aa).

A coiled-coil region spans residues 51–87; sequence MLRQIREARRKEEKQQEANLKNRQKSLKEEEQERRDI. Positions 59–84 are disordered; the sequence is RRKEEKQQEANLKNRQKSLKEEEQER. In terms of domain architecture, G-patch spans 95-141; it reads CENKGFALLQKMGYKSGQALGKSGGGIVEPIPLNIKTGKSGIGHEAS. A Phosphoserine modification is found at Ser141. Residue Lys149 is modified to N6-acetyllysine. Over residues 218-235 the composition is skewed to acidic residues; it reads EETEEDEEEKEQDEDEYK. The tract at residues 218 to 237 is disordered; the sequence is EETEEDEEEKEQDEDEYKSE.

The protein belongs to the GPATCH11 family.

It is found in the chromosome. Its subcellular location is the centromere. It localises to the kinetochore. The chain is G patch domain-containing protein 11 (GPATCH11) from Homo sapiens (Human).